The following is a 268-amino-acid chain: Elongation factor Ts (268 aa).

The segment at Thr-81 to Val-84 is involved in Mg(2+) ion dislocation from EF-Tu.

The protein belongs to the EF-Ts family.

The protein localises to the cytoplasm. In terms of biological role, associates with the EF-Tu.GDP complex and induces the exchange of GDP to GTP. It remains bound to the aminoacyl-tRNA.EF-Tu.GTP complex up to the GTP hydrolysis stage on the ribosome. The protein is Elongation factor Ts of Buchnera aphidicola subsp. Acyrthosiphon pisum (strain 5A).